The primary structure comprises 668 residues: Spartin (668 aa).

At Met1 the chain carries N-acetylmethionine. The MIT domain maps to 16 to 94; sequence IKEAYKKAFV…LQNVRTRLEI (79 aa). The segment at 110–176 is disordered; the sequence is VPKLYPEFPP…PSEAPPAYTP (67 aa). Basic and acidic residues predominate over residues 118 to 127; that stretch reads PPKDMSEKSP. At Ser126 the chain carries Phosphoserine. A compositionally biased stretch (low complexity) spans 128-162; it reads EPQSLSSLPQHSEVNGSTSTASAESSSTPTTLSLP. Residues 190-380 are ubiquitin-binding region (UBR) domain; sequence ESGEFSSVGE…QLDPSSKDVR (191 aa). The LC3-interacting region (LIR); mediates interaction with MAP1LC3A AND MAP1LC3C signature appears at 193 to 200; that stretch reads EFSSVGEN. The disordered stretch occupies residues 348 to 396; the sequence is FQIPGISGSASDQLKEASGTDVRQLDPSSKDVRQKGKRGKKTKGTSSEE. Lys362 participates in a covalent cross-link: Glycyl lysine isopeptide (Lys-Gly) (interchain with G-Cter in ubiquitin). One can recognise a Senescence domain in the interval 427–611; that stretch reads ILSGASWVSW…YNIDNIGIKA (185 aa). A required for localization to lipid droplets region spans residues 431 to 503; it reads ASWVSWGLVK…LVDGVCTVAN (73 aa). Phosphoserine is present on Ser470. The tract at residues 631 to 668 is disordered; sequence IDNSKGENPGGGASANLKGEKDEQKEGPEKNGAKKKDK. Residues 648–668 are compositionally biased toward basic and acidic residues; the sequence is KGEKDEQKEGPEKNGAKKKDK.

In terms of assembly, interacts with ITCH and WWP1. Interacts (via MIT domain) with IST1; leading to the recruitment of SPART to midbodies. Interacts with MAP1LC3A and MAP1LC3C. Ubiquitinated; ubiquitination does not require ITCH and WWP1.

The protein resides in the cytoplasm. Its subcellular location is the midbody. It localises to the lipid droplet. Lipophagy receptor that plays an important role in lipid droplet (LD) turnover in motor neurons. Localizes to LDs and interacts with components of the autophagy machinery, such as MAP1LC3A/C proteins to deliver LDs to autophagosomes for degradation via lipophagy. Lipid transfer protein required for lipid droplet degradation, including by lipophagy. Can bind and transfer all lipid species found in lipid droplets, from phospholipids to triglycerides and sterol esters but the direction of lipid transfer by spartin and its cargos are unknown. May be implicated in endosomal trafficking, or microtubule dynamics, or both. Participates in cytokinesis. The polypeptide is Spartin (Bos taurus (Bovine)).